We begin with the raw amino-acid sequence, 99 residues long: EPIDERMAL PATTERNING FACTOR-like protein 8 (99 aa).

Positions Met1–His35 are cleaved as a signal peptide. 3 cysteine pairs are disulfide-bonded: Cys53–Cys90, Cys57–Cys63, and Cys60–Cys92.

The protein belongs to the plant cysteine rich small secretory peptide family. Epidermal patterning factor subfamily.

Its subcellular location is the secreted. In terms of biological role, controls stomatal patterning. The chain is EPIDERMAL PATTERNING FACTOR-like protein 8 from Arabidopsis thaliana (Mouse-ear cress).